The following is a 205-amino-acid chain: Probable DNA-binding protein (205 aa).

Residues Gly140–Gly168 form a disordered region.

In Homo sapiens (Human), this protein is Probable DNA-binding protein.